Consider the following 637-residue polypeptide: Biosynthetic arginine decarboxylase (637 aa).

Lysine 107 carries the N6-(pyridoxal phosphate)lysine modification. 289–299 (LDVGGGLGVDY) serves as a coordination point for substrate.

It belongs to the Orn/Lys/Arg decarboxylase class-II family. SpeA subfamily. Mg(2+) is required as a cofactor. It depends on pyridoxal 5'-phosphate as a cofactor.

The catalysed reaction is L-arginine + H(+) = agmatine + CO2. Functionally, catalyzes the biosynthesis of agmatine from arginine. The sequence is that of Biosynthetic arginine decarboxylase from Thermosynechococcus vestitus (strain NIES-2133 / IAM M-273 / BP-1).